The sequence spans 438 residues: Transcriptional regulator Mb0495 (438 aa).

The span at 1–12 (MYSTNRTSQSLS) shows a compositional bias: polar residues. Positions 1-22 (MYSTNRTSQSLSRKPGRKHQLR) are disordered. The H-T-H motif DNA-binding region spans 52–73 (VGRDVIAGSTSLSIATVNRQVI).

This sequence belongs to the ROK (NagC/XylR) family.

In terms of biological role, positively regulates the expression of PE13 and PPE18. The protein is Transcriptional regulator Mb0495 of Mycobacterium bovis (strain ATCC BAA-935 / AF2122/97).